Here is a 206-residue protein sequence, read N- to C-terminus: MLGLIGKKVGMTQIFQKNGIVIPVTVIEFQPNYIIGKKTVDRDGYSALIAGSVDLKGSKVSKPIKGQYKSLKDIEPKKYVIELKGLDGYDAGDEIKVDVFKSVKYVDVTGTTKGKGFQGAMKRHNFSGGPSSHGSKFHRHLGGTGQATTPARTFKGTKMAGRMGGNKQTIQNLEVVLIDEENRAILVKGAVPGAKGSFVVVKKSKK.

A disordered region spans residues 127 to 151; it reads SGGPSSHGSKFHRHLGGTGQATTPA.

It belongs to the universal ribosomal protein uL3 family. As to quaternary structure, part of the 50S ribosomal subunit. Forms a cluster with proteins L14 and L19.

In terms of biological role, one of the primary rRNA binding proteins, it binds directly near the 3'-end of the 23S rRNA, where it nucleates assembly of the 50S subunit. This is Large ribosomal subunit protein uL3 from Borrelia garinii subsp. bavariensis (strain ATCC BAA-2496 / DSM 23469 / PBi) (Borreliella bavariensis).